The primary structure comprises 226 residues: Probable chemoreceptor glutamine deamidase CheD (226 aa).

Residues 207–226 (PGGMRVERFDTPSRRDPVGA) form a disordered region.

Belongs to the CheD family.

The catalysed reaction is L-glutaminyl-[protein] + H2O = L-glutamyl-[protein] + NH4(+). Functionally, probably deamidates glutamine residues to glutamate on methyl-accepting chemotaxis receptors (MCPs), playing an important role in chemotaxis. The polypeptide is Probable chemoreceptor glutamine deamidase CheD (Bordetella bronchiseptica (strain ATCC BAA-588 / NCTC 13252 / RB50) (Alcaligenes bronchisepticus)).